The following is a 357-amino-acid chain: uncharacterized protein (357 aa).

The first 19 residues, 1–19, serve as a signal peptide directing secretion; the sequence is MKRILSFIFIILFFNSSYA.

This is an uncharacterized protein from Rickettsia prowazekii (strain Madrid E).